The following is a 459-amino-acid chain: Chromosomal replication initiator protein DnaA (459 aa).

Residues 1-83 (MKNAREIWRN…NKLEIHFIEE (83 aa)) are domain I, interacts with DnaA modulators. The domain II stretch occupies residues 83–121 (ESQAHKYAPADGSSNESIAVTETKEQPVLLPSKEEGDLG). The domain III, AAA+ region stretch occupies residues 122–338 (QLNDKYIFET…GALTRVVAYA (217 aa)). Positions 166, 168, 169, and 170 each coordinate ATP. A domain IV, binds dsDNA region spans residues 339–459 (KLVGRPIDPD…IQTLKKALSN (121 aa)).

This sequence belongs to the DnaA family. As to quaternary structure, oligomerizes as a right-handed, spiral filament on DNA at oriC.

It is found in the cytoplasm. Plays an essential role in the initiation and regulation of chromosomal replication. ATP-DnaA binds to the origin of replication (oriC) to initiate formation of the DNA replication initiation complex once per cell cycle. Binds the DnaA box (a 9 base pair repeat at the origin) and separates the double-stranded (ds)DNA. Forms a right-handed helical filament on oriC DNA; dsDNA binds to the exterior of the filament while single-stranded (ss)DNA is stabiized in the filament's interior. The ATP-DnaA-oriC complex binds and stabilizes one strand of the AT-rich DNA unwinding element (DUE), permitting loading of DNA polymerase. After initiation quickly degrades to an ADP-DnaA complex that is not apt for DNA replication. Binds acidic phospholipids. The chain is Chromosomal replication initiator protein DnaA from Exiguobacterium sp. (strain ATCC BAA-1283 / AT1b).